The following is a 638-amino-acid chain: 1-deoxy-D-xylulose-5-phosphate synthase (638 aa).

Thiamine diphosphate is bound by residues His75 and 116-118 (AHS). Asp147 serves as a coordination point for Mg(2+). Residues 148–149 (GA), Asn177, Tyr288, and Glu370 contribute to the thiamine diphosphate site. Asn177 lines the Mg(2+) pocket.

Belongs to the transketolase family. DXPS subfamily. Homodimer. Mg(2+) is required as a cofactor. Thiamine diphosphate serves as cofactor.

It catalyses the reaction D-glyceraldehyde 3-phosphate + pyruvate + H(+) = 1-deoxy-D-xylulose 5-phosphate + CO2. It participates in metabolic intermediate biosynthesis; 1-deoxy-D-xylulose 5-phosphate biosynthesis; 1-deoxy-D-xylulose 5-phosphate from D-glyceraldehyde 3-phosphate and pyruvate: step 1/1. Catalyzes the acyloin condensation reaction between C atoms 2 and 3 of pyruvate and glyceraldehyde 3-phosphate to yield 1-deoxy-D-xylulose-5-phosphate (DXP). The polypeptide is 1-deoxy-D-xylulose-5-phosphate synthase (Cupriavidus taiwanensis (strain DSM 17343 / BCRC 17206 / CCUG 44338 / CIP 107171 / LMG 19424 / R1) (Ralstonia taiwanensis (strain LMG 19424))).